We begin with the raw amino-acid sequence, 212 residues long: Nitric oxide synthase (212 aa).

Tyrosine 11 lines the heme b pocket. The calmodulin-binding stretch occupies residues 30 to 50 (KKRAIGFKKLAKAVKFSTKLM). In terms of domain architecture, Flavodoxin-like spans 60-212 (ATILYATETG…AVDTLLEELG (153 aa)). The interval 155–175 (SYSDSRKSSSDEPEHKDNFES) is disordered. The segment covering 158–173 (DSRKSSSDEPEHKDNF) has biased composition (basic and acidic residues). Residue 186 to 212 (AFGLGSRAYPHFCAFARAVDTLLEELG) participates in FMN binding.

The protein belongs to the NOS family. Heme b is required as a cofactor. FAD serves as cofactor. The cofactor is FMN.

It catalyses the reaction 2 L-arginine + 3 NADPH + 4 O2 + H(+) = 2 L-citrulline + 2 nitric oxide + 3 NADP(+) + 4 H2O. Functionally, produces nitric oxide (NO) which is a messenger molecule with diverse functions throughout the body. This is Nitric oxide synthase from Squalus acanthias (Spiny dogfish).